Here is a 117-residue protein sequence, read N- to C-terminus: MHEMSIALSIVDAVVAKARQEGGVRISAIDLLIGKLAGIEPESLKFCFSAAARETLAAEALLNIEEPEGVGECGECGMSFPVNFYYAECPRCRSLRVKIVSGEEFLIQSMTIEEEGE.

Ni(2+) is bound at residue His-2. Residues Cys-73, Cys-76, Cys-89, and Cys-92 each contribute to the Zn(2+) site.

The protein belongs to the HypA/HybF family.

Its function is as follows. Involved in the maturation of [NiFe] hydrogenases. Required for nickel insertion into the metal center of the hydrogenase. In Pelodictyon phaeoclathratiforme (strain DSM 5477 / BU-1), this protein is Hydrogenase maturation factor HypA.